Consider the following 353-residue polypeptide: 6-phosphogluconolactonase (353 aa).

This sequence belongs to the cycloisomerase 2 family.

It localises to the cytoplasm. The catalysed reaction is 6-phospho-D-glucono-1,5-lactone + H2O = 6-phospho-D-gluconate + H(+). It functions in the pathway carbohydrate degradation; pentose phosphate pathway; D-ribulose 5-phosphate from D-glucose 6-phosphate (oxidative stage): step 2/3. Its function is as follows. Carboxylic ester hydrolase that may be involved in ulvan degradation. Ulvan is the main polysaccharide component of the Ulvales (green seaweed) cell wall. It is composed of disaccharide building blocks comprising 3-sulfated rhamnose (Rha3S) linked to D-glucuronic acid (GlcA), L-iduronic acid (IduA), or D-xylose (Xyl). Catalyzes the hydrolysis of 6-phosphogluconolactone to 6-phosphogluconate. This Formosa agariphila (strain DSM 15362 / KCTC 12365 / LMG 23005 / KMM 3901 / M-2Alg 35-1) protein is 6-phosphogluconolactonase (pgl).